Consider the following 529-residue polypeptide: Protein PNS1 (529 aa).

Residues 1–58 (MSQQYSYGGGGGAGYPPPQMQPPNSYAQANYQGQPQGAQNQYYNGQQPHHNAPQQYYG) are disordered. The Cytoplasmic portion of the chain corresponds to 1 to 84 (MSQQYSYGGG…LQPKPKFRDP (84 aa)). The segment covering 22-48 (PPNSYAQANYQGQPQGAQNQYYNGQQP) has biased composition (low complexity). The helical transmembrane segment at 85–105 (IFLVLFLLVFAGFIALSVICL) threads the bilayer. Topologically, residues 106-132 (RSYSNADVNVSIGRANVAGSTLNGHTA) are extracellular. Asn-114 carries an N-linked (GlcNAc...) asparagine glycan. A helical transmembrane segment spans residues 133–153 (IMFMICCAVALVLSFVYILLV). Over 154-158 (RTFPK) the chain is Cytoplasmic. The helical transmembrane segment at 159 to 179 (IILEATLLLTTLSNVAFCVYL) threads the bilayer. Residues 180–184 (WVRGN) are Extracellular-facing. The chain crosses the membrane as a helical span at residues 185–205 (TAAAIIFTIFAVLSVIAYFFM). Topologically, residues 206 to 230 (RKRIPLAKLILVTVIRTAEQYKSVY) are cytoplasmic. The helical transmembrane segment at 231–251 (VVALGGLIVETAFSAWTSWVV) threads the bilayer. Residues 252–271 (VAAYQRFEPSGQAAGSSSSN) are Extracellular-facing. A glycan (N-linked (GlcNAc...) asparagine) is linked at Asn-271. The chain crosses the membrane as a helical span at residues 272 to 292 (ASIIGIMVFIVFAYYWISEVI). Over 293 to 294 (KN) the chain is Cytoplasmic. A helical membrane pass occupies residues 295–315 (IAFTTVAGIFGVAYYNANKVA). The Extracellular segment spans residues 316 to 325 (NAAWGAFRRS). A helical membrane pass occupies residues 326–346 (MTYSLGSICFGSLIVAILDLL). The Cytoplasmic segment spans residues 347-362 (RALFNILQSQAASDGD). The helical transmembrane segment at 363-383 (MTGQILACVAGCCVSCIQGLV) threads the bilayer. Residues 384-427 (DYFNRYAYINIALYGNGYITAAKETWALLKDRGIDAIINDSLVN) are Extracellular-facing. Residue Asn-422 is glycosylated (N-linked (GlcNAc...) asparagine). Residues 428 to 448 (IVFNCGAFIIGLLTALFAFIY) traverse the membrane as a helical segment. The Cytoplasmic segment spans residues 449-464 (EQLTNPRYLQNDAGYY). A helical transmembrane segment spans residues 465–485 (SIVLLVAFGLGFNIALSVGAG). The Extracellular segment spans residues 486–529 (SIASGVSTYFVALAEDPYILQGKNPELFEMIRQQYPQVVQGVNH).

The protein belongs to the CTL (choline transporter-like) family.

The protein resides in the cell membrane. Functionally, probably involved in transport through the plasma membrane. The protein is Protein PNS1 (PNS1) of Mycosarcoma maydis (Corn smut fungus).